Here is a 164-residue protein sequence, read N- to C-terminus: Kunitz-type trypsin inhibitor BrTI (164 aa).

Belongs to the leguminous Kunitz-type inhibitor family.

Inhibitor of trypsin and human plasma kallikrein with a Ki of 2.9 nM and 14.0 nM, respectively. Does not inhibit chymotrypsin, porcine pancreatic elastas, human neutrophil elastase, coagulation factor Xa, human thrombin, porcine pancreatic kallikrein or plasmin. The sequence is that of Kunitz-type trypsin inhibitor BrTI from Bauhinia rufa (Orchid tree).